The following is a 1060-amino-acid chain: DNA topoisomerase 1 (1060 aa).

Positions 1 to 141 (MILVIAEKPN…KRMKFSALTK (141 aa)) constitute a Toprim domain. The Mg(2+) site is built by E7 and D107. Positions 156–947 (NFGMANAGIA…EAKIRLTKIL (792 aa)) constitute a Topo IA-type catalytic domain. Residues 196–201 (STGRVQ) form an interaction with DNA region. The DOD-type homing endonuclease domain occupies 482 to 591 (LIGYLAGKGG…IKVYLQLLGI (110 aa)). Residue Y690 is the O-(5'-phospho-DNA)-tyrosine intermediate of the active site. The segment at 978–1006 (CPKCGGDLIVKYNEKTGKRFVGCSNWPKC) adopts a C4-type 1 zinc-finger fold. The segment at 1025–1050 (CCNGAPVVIIREKDGREWEICLDMNC) adopts a C4-type 2; atypical zinc-finger fold.

The protein belongs to the type IA topoisomerase family. Monomer. Mg(2+) serves as cofactor. This protein undergoes a protein self splicing that involves a post-translational excision of the intervening region (intein) followed by peptide ligation.

It catalyses the reaction ATP-independent breakage of single-stranded DNA, followed by passage and rejoining.. In terms of biological role, releases the supercoiling and torsional tension of DNA, which is introduced during the DNA replication and transcription, by transiently cleaving and rejoining one strand of the DNA duplex. Introduces a single-strand break via transesterification at a target site in duplex DNA. The scissile phosphodiester is attacked by the catalytic tyrosine of the enzyme, resulting in the formation of a DNA-(5'-phosphotyrosyl)-enzyme intermediate and the expulsion of a 3'-OH DNA strand. The free DNA strand then undergoes passage around the unbroken strand, thus removing DNA supercoils. Finally, in the religation step, the DNA 3'-OH attacks the covalent intermediate to expel the active-site tyrosine and restore the DNA phosphodiester backbone. The sequence is that of DNA topoisomerase 1 (topA) from Pyrococcus furiosus (strain ATCC 43587 / DSM 3638 / JCM 8422 / Vc1).